The primary structure comprises 397 residues: Probable N-succinyldiaminopimelate aminotransferase DapC (397 aa).

Pyridoxal 5'-phosphate contacts are provided by residues 109 to 110 (GS) and 218 to 222 (DGMAE). Lysine 232 is modified (N6-(pyridoxal phosphate)lysine).

The protein belongs to the class-III pyridoxal-phosphate-dependent aminotransferase family. As to quaternary structure, homodimer. It depends on pyridoxal 5'-phosphate as a cofactor.

Its subcellular location is the cytoplasm. The enzyme catalyses N-succinyl-(2S,6S)-2,6-diaminopimelate + 2-oxoglutarate = (S)-2-succinylamino-6-oxoheptanedioate + L-glutamate. It functions in the pathway amino-acid biosynthesis; L-lysine biosynthesis via DAP pathway; LL-2,6-diaminopimelate from (S)-tetrahydrodipicolinate (succinylase route): step 2/3. Involved in the lysine biosynthetic pathways. It catalyzes the transfer of an amino group from L-glutamate to N-succinyl-2-l-amino-6-oxoheptanedioate (N-succinyl-2-l-amino-6-ketopimelate) in a PLP-dependent reaction, yielding as products N-succinyl-l-2,6-diaminoheptanedioate (N-succinyl-diaminopimelate) and 2-oxoglutarate. This Mycobacterium tuberculosis (strain CDC 1551 / Oshkosh) protein is Probable N-succinyldiaminopimelate aminotransferase DapC (dapC).